A 184-amino-acid polypeptide reads, in one-letter code: NADH-quinone oxidoreductase subunit B (184 aa).

Positions 37, 38, 103, and 132 each coordinate [4Fe-4S] cluster.

Belongs to the complex I 20 kDa subunit family. NDH-1 is composed of 14 different subunits. Subunits NuoB, C, D, E, F, and G constitute the peripheral sector of the complex. It depends on [4Fe-4S] cluster as a cofactor.

It localises to the cell membrane. It catalyses the reaction a quinone + NADH + 5 H(+)(in) = a quinol + NAD(+) + 4 H(+)(out). In terms of biological role, NDH-1 shuttles electrons from NADH, via FMN and iron-sulfur (Fe-S) centers, to quinones in the respiratory chain. The immediate electron acceptor for the enzyme in this species is believed to be a menaquinone. Couples the redox reaction to proton translocation (for every two electrons transferred, four hydrogen ions are translocated across the cytoplasmic membrane), and thus conserves the redox energy in a proton gradient. In Mycobacterium bovis (strain BCG / Pasteur 1173P2), this protein is NADH-quinone oxidoreductase subunit B.